The primary structure comprises 172 residues: MDKVLNREESMELMDLLGLDRSAWGNIPVMRKAYLKKCKELHPDKGGDEDKMKRMNFLYKKMEQGVKVAHQPDFGTWNSSEVGCDFPPNSDTLYCKEWPNCATNPSVHCPCLMCMLKLRHRNRKFLRSSPLVWIDCYCFDCFRQWFGCDLTQEALHCWEKVLGDTPYRDLKL.

An N-acetylmethionine; by host modification is found at Met-1. The J domain maps to 12–75 (ELMDLLGLDR…VKVAHQPDFG (64 aa)). A C4-type; atypical zinc finger spans residues 101 to 114 (CATNPSVHCPCLMC). The H1C3-type; atypical zinc finger occupies 120–141 (HRNRKFLRSSPLVWIDCYCFDC).

As to quaternary structure, interacts with host PPP2R1A; the interaction inhibits PP2A activity. Interacts with agnoprotein; this interaction prevents agnoprotein dephosphorylation by host PP2A. Interacts with host RBL1 and RBL2. Interacts with SMARCA5. Interacts with SDHB.

The protein localises to the host cytoplasm. It localises to the host nucleus. In terms of biological role, promotes efficient viral genome replication by modulating several host signaling pathways including transport network, interferon production or cell cycle progression. Inhibits host PP2A phosphatase activity and thereby prevents agnoprotein dephosphorylation. Inactivation of PP2A also results in the transactivation of cyclin A and cyclin D1 promoters. In addition, antagonizes the RIGI-mediated IFN response through interaction with E3 ligase TRIM25 leading to the inhibition of 'Lys-63'-linked ubiquitination of RIGI. Inhibits nucleotide excision repair (NER) pathway which leads to DNA strand breaks during DNA replication and micronuclei formation. The polypeptide is Small t antigen (JC polyomavirus (JCPyV)).